The chain runs to 177 residues: Pyruvate synthase subunit PorC (177 aa).

Heterotetramer of one alpha, one beta, one delta and one gamma chain.

It catalyses the reaction 2 oxidized [2Fe-2S]-[ferredoxin] + pyruvate + CoA = 2 reduced [2Fe-2S]-[ferredoxin] + acetyl-CoA + CO2 + H(+). In Methanothermobacter marburgensis (strain ATCC BAA-927 / DSM 2133 / JCM 14651 / NBRC 100331 / OCM 82 / Marburg) (Methanobacterium thermoautotrophicum), this protein is Pyruvate synthase subunit PorC (porC).